Here is a 212-residue protein sequence, read N- to C-terminus: ATP-dependent dethiobiotin synthetase BioD (212 aa).

ATP is bound at residue 12–17 (DCGKTF). A Mg(2+)-binding site is contributed by Thr-16. Lys-33 is a catalytic residue. Ser-37 provides a ligand contact to substrate. Residues Asp-50, 110–113 (EGAG), and 170–171 (NC) each bind ATP. The Mg(2+) site is built by Asp-50 and Glu-110.

The protein belongs to the dethiobiotin synthetase family. In terms of assembly, homodimer. Mg(2+) serves as cofactor.

Its subcellular location is the cytoplasm. The enzyme catalyses (7R,8S)-7,8-diammoniononanoate + CO2 + ATP = (4R,5S)-dethiobiotin + ADP + phosphate + 3 H(+). It functions in the pathway cofactor biosynthesis; biotin biosynthesis; biotin from 7,8-diaminononanoate: step 1/2. Functionally, catalyzes a mechanistically unusual reaction, the ATP-dependent insertion of CO2 between the N7 and N8 nitrogen atoms of 7,8-diaminopelargonic acid (DAPA, also called 7,8-diammoniononanoate) to form a ureido ring. This is ATP-dependent dethiobiotin synthetase BioD from Legionella pneumophila (strain Lens).